Reading from the N-terminus, the 220-residue chain is Coat protein (220 aa).

Belongs to the potexvirus capsid protein family.

It localises to the virion. In terms of biological role, required for genome encapsidation. Forms ribonucleoprotein complexes along with TGB1 helicase and viral RNA. The chain is Coat protein from Cattleya (Nun's hood orchid).